Reading from the N-terminus, the 198-residue chain is Dual specificity protein phosphatase 1 (198 aa).

The tract at residues 1 to 20 (MSSRDRGSPSSSSSSSSLPG) is disordered. Over residues 8–17 (SPSSSSSSSS) the composition is skewed to low complexity. Residues 26 to 47 (EKVKNQIQALVRVIKVARTYRD) are caM binding domain 1. One can recognise a Tyrosine-protein phosphatase domain in the interval 50–191 (VPSLIEQGLY…LQDLEKSMQV (142 aa)). The Phosphocysteine intermediate role is filled by Cys135. Positions 151-180 (MKKHGMTLAQALQHVKSKRPVASPNAGFIR) are caM binding domain 2.

The protein belongs to the protein-tyrosine phosphatase family. Non-receptor class dual specificity subfamily. As to quaternary structure, interacts with calmodulin (CaM) in a calcium Ca(2+)-dependent manner. Expressed in roots, stems, leaves and flowers.

The protein localises to the nucleus. It is found in the cytoplasm. It carries out the reaction O-phospho-L-tyrosyl-[protein] + H2O = L-tyrosyl-[protein] + phosphate. The catalysed reaction is O-phospho-L-seryl-[protein] + H2O = L-seryl-[protein] + phosphate. It catalyses the reaction O-phospho-L-threonyl-[protein] + H2O = L-threonyl-[protein] + phosphate. Its activity is regulated as follows. Inhibited by sodium vanadate and sodium tungstate. NaF and spermifine repress specifically phosphoserine and phosphothreonine phosphatase activity. In terms of biological role, has a dual specificity toward Ser/Thr and Tyr-containing proteins. Dephosphorylates MPK4 in vitro. The protein is Dual specificity protein phosphatase 1 (DSPTP1) of Arabidopsis thaliana (Mouse-ear cress).